Here is a 696-residue protein sequence, read N- to C-terminus: Polyribonucleotide nucleotidyltransferase (696 aa).

D489 and D495 together coordinate Mg(2+). The region spanning 556–615 is the KH domain; it reads PQYVTMKINPEKIRDVIGKGGVVIREITEATNCAIDISDDGTIKIAAHTTEEGEAAKRRI. Residues 625-693 enclose the S1 motif domain; the sequence is GKVYEGTVVK…RQGRVRLSMK (69 aa).

The protein belongs to the polyribonucleotide nucleotidyltransferase family. Component of the RNA degradosome, which is a multiprotein complex involved in RNA processing and mRNA degradation. Mg(2+) serves as cofactor.

The protein localises to the cytoplasm. It carries out the reaction RNA(n+1) + phosphate = RNA(n) + a ribonucleoside 5'-diphosphate. Involved in mRNA degradation. Catalyzes the phosphorolysis of single-stranded polyribonucleotides processively in the 3'- to 5'-direction. In Coxiella burnetii (strain CbuG_Q212) (Coxiella burnetii (strain Q212)), this protein is Polyribonucleotide nucleotidyltransferase.